A 388-amino-acid chain; its full sequence is L-lactate dehydrogenase (388 aa).

In terms of domain architecture, FMN hydroxy acid dehydrogenase spans 1-380; the sequence is MIISSSSDYR…SRDSLVREIE (380 aa). Tyr24 contacts substrate. Residues Ser106 and Gln127 each coordinate FMN. Position 129 (Tyr129) interacts with substrate. An FMN-binding site is contributed by Thr155. Substrate is bound at residue Arg164. Lys251 contributes to the FMN binding site. Residue His275 is the Proton acceptor of the active site. Arg278 contributes to the substrate binding site. An FMN-binding site is contributed by 306–330; it reads DSGIRSGLDVVRMLAQGADGVLLGR.

It belongs to the FMN-dependent alpha-hydroxy acid dehydrogenase family. Requires FMN as cofactor.

It localises to the cell inner membrane. It catalyses the reaction (S)-lactate + A = pyruvate + AH2. In terms of biological role, catalyzes the conversion of L-lactate to pyruvate. Is coupled to the respiratory chain. The chain is L-lactate dehydrogenase from Xanthobacter autotrophicus (strain ATCC BAA-1158 / Py2).